The chain runs to 510 residues: Pyruvate kinase, cytosolic isozyme (510 aa).

Residue Arg50 participates in substrate binding. Asn52, Ser54, Asp84, and Thr85 together coordinate K(+). An ATP-binding site is contributed by Asn52–His55. The ATP site is built by Arg91 and Lys176. Glu242 is a Mg(2+) binding site. The substrate site is built by Gly265, Asp266, and Thr298. Asp266 is a binding site for Mg(2+).

This sequence belongs to the pyruvate kinase family. Homotetramer. The cofactor is Mg(2+). It depends on K(+) as a cofactor.

It is found in the cytoplasm. It carries out the reaction pyruvate + ATP = phosphoenolpyruvate + ADP + H(+). The protein operates within carbohydrate degradation; glycolysis; pyruvate from D-glyceraldehyde 3-phosphate: step 5/5. The polypeptide is Pyruvate kinase, cytosolic isozyme (Solanum tuberosum (Potato)).